The sequence spans 343 residues: Cytoplasmic tRNA 2-thiolation protein 1 (343 aa).

This sequence belongs to the TtcA family. CTU1/NCS6/ATPBD3 subfamily.

It is found in the cytoplasm. The protein operates within tRNA modification; 5-methoxycarbonylmethyl-2-thiouridine-tRNA biosynthesis. Its function is as follows. Plays a central role in 2-thiolation of mcm(5)S(2)U at tRNA wobble positions of tRNA(Lys), tRNA(Glu) and tRNA(Gln). Directly binds tRNAs and probably acts by catalyzing adenylation of tRNAs, an intermediate required for 2-thiolation. It is unclear whether it acts as a sulfurtransferase that transfers sulfur from thiocarboxylated URM1 onto the uridine of tRNAs at wobble position. The sequence is that of Cytoplasmic tRNA 2-thiolation protein 1 from Drosophila yakuba (Fruit fly).